The sequence spans 244 residues: uncharacterized protein (244 aa).

The 178-residue stretch at 19 to 196 (ATDNRKLVIL…ACVIRYLKHL (178 aa)) folds into the FCP1 homology domain.

This is an uncharacterized protein from Schizosaccharomyces pombe (strain 972 / ATCC 24843) (Fission yeast).